Here is a 305-residue protein sequence, read N- to C-terminus: UDP-3-O-acyl-N-acetylglucosamine deacetylase (305 aa).

His79, His238, and Asp242 together coordinate Zn(2+). His265 serves as the catalytic Proton donor.

The protein belongs to the LpxC family. It depends on Zn(2+) as a cofactor.

It catalyses the reaction a UDP-3-O-[(3R)-3-hydroxyacyl]-N-acetyl-alpha-D-glucosamine + H2O = a UDP-3-O-[(3R)-3-hydroxyacyl]-alpha-D-glucosamine + acetate. It functions in the pathway glycolipid biosynthesis; lipid IV(A) biosynthesis; lipid IV(A) from (3R)-3-hydroxytetradecanoyl-[acyl-carrier-protein] and UDP-N-acetyl-alpha-D-glucosamine: step 2/6. Catalyzes the hydrolysis of UDP-3-O-myristoyl-N-acetylglucosamine to form UDP-3-O-myristoylglucosamine and acetate, the committed step in lipid A biosynthesis. The protein is UDP-3-O-acyl-N-acetylglucosamine deacetylase of Escherichia fergusonii (strain ATCC 35469 / DSM 13698 / CCUG 18766 / IAM 14443 / JCM 21226 / LMG 7866 / NBRC 102419 / NCTC 12128 / CDC 0568-73).